We begin with the raw amino-acid sequence, 722 residues long: Threonine--tRNA ligase 1, cytoplasmic (722 aa).

Residues 1-10 (MSQEKASSPS) are compositionally biased toward polar residues. The disordered stretch occupies residues 1 to 48 (MSQEKASSPSGKMDGEKPVDASEEKRKEGGKKKSKDGGGDGGRAELNP). A compositionally biased stretch (basic and acidic residues) spans 13–27 (MDGEKPVDASEEKRK). The region spanning 78 to 142 (DSKPIKVTLP…ETDCTLELLK (65 aa)) is the TGS domain. Position 242 is an N6-acetyllysine (lysine 242). Residue threonine 245 is modified to Phosphothreonine. At tyrosine 297 the chain carries Phosphotyrosine. The residue at position 452 (threonine 452) is a Phosphothreonine.

Belongs to the class-II aminoacyl-tRNA synthetase family. Homodimer. In terms of processing, ISGylated.

It is found in the cytoplasm. The catalysed reaction is tRNA(Thr) + L-threonine + ATP = L-threonyl-tRNA(Thr) + AMP + diphosphate + H(+). In terms of biological role, catalyzes the attachment of threonine to tRNA(Thr) in a two-step reaction: threonine is first activated by ATP to form Thr-AMP and then transferred to the acceptor end of tRNA(Thr). Also edits incorrectly charged tRNA(Thr) via its editing domain, at the post-transfer stage. This chain is Threonine--tRNA ligase 1, cytoplasmic (Tars1), found in Mus musculus (Mouse).